Reading from the N-terminus, the 181-residue chain is Peptide deformylase 1 (181 aa).

2 residues coordinate Fe cation: Cys-106 and His-148. Glu-149 is a catalytic residue. His-152 lines the Fe cation pocket.

This sequence belongs to the polypeptide deformylase family. Fe(2+) is required as a cofactor.

It carries out the reaction N-terminal N-formyl-L-methionyl-[peptide] + H2O = N-terminal L-methionyl-[peptide] + formate. In terms of biological role, removes the formyl group from the N-terminal Met of newly synthesized proteins. Requires at least a dipeptide for an efficient rate of reaction. N-terminal L-methionine is a prerequisite for activity but the enzyme has broad specificity at other positions. This chain is Peptide deformylase 1, found in Burkholderia multivorans (strain ATCC 17616 / 249).